The primary structure comprises 264 residues: S-adenosylmethionine decarboxylase proenzyme (264 aa).

Ser-114 acts as the Schiff-base intermediate with substrate; via pyruvic acid in catalysis. At Ser-114 the chain carries Pyruvic acid (Ser); by autocatalysis. The active-site Proton acceptor; for processing activity is His-119. The active-site Proton donor; for catalytic activity is Cys-142.

This sequence belongs to the prokaryotic AdoMetDC family. Type 2 subfamily. As to quaternary structure, heterooctamer of four alpha and four beta chains arranged as a tetramer of alpha/beta heterodimers. Pyruvate serves as cofactor. Is synthesized initially as an inactive proenzyme. Formation of the active enzyme involves a self-maturation process in which the active site pyruvoyl group is generated from an internal serine residue via an autocatalytic post-translational modification. Two non-identical subunits are generated from the proenzyme in this reaction, and the pyruvate is formed at the N-terminus of the alpha chain, which is derived from the carboxyl end of the proenzyme. The post-translation cleavage follows an unusual pathway, termed non-hydrolytic serinolysis, in which the side chain hydroxyl group of the serine supplies its oxygen atom to form the C-terminus of the beta chain, while the remainder of the serine residue undergoes an oxidative deamination to produce ammonia and the pyruvoyl group blocking the N-terminus of the alpha chain.

It catalyses the reaction S-adenosyl-L-methionine + H(+) = S-adenosyl 3-(methylsulfanyl)propylamine + CO2. The protein operates within amine and polyamine biosynthesis; S-adenosylmethioninamine biosynthesis; S-adenosylmethioninamine from S-adenosyl-L-methionine: step 1/1. Catalyzes the decarboxylation of S-adenosylmethionine to S-adenosylmethioninamine (dcAdoMet), the propylamine donor required for the synthesis of the polyamines spermine and spermidine from the diamine putrescine. The polypeptide is S-adenosylmethionine decarboxylase proenzyme (Chromohalobacter salexigens (strain ATCC BAA-138 / DSM 3043 / CIP 106854 / NCIMB 13768 / 1H11)).